The sequence spans 433 residues: MSKKLFIQTLGCAMNVRDSEHIIAELSQKEDYSLTQNIEEADLILINTCSVREKPVHKLFSEVGAFEKAKKRGAKIGVCGCTASHLGSEIFKRAPYVDFVLGARNVSKITKAVNTPKFISTDINHDESEYAFGEFRGSPYKSHINISIGCDKKCTYCIVPHTRGDEISIPSSLILKEVEKAAKSGAKEIFLLGQNVNNYGKRFSGVQENIDFSDLLVKISEIEGVERIRFTSPHPLHMDDKFLEIFTNNPKICKSMHMPLQSGNTKVLREMKRGYTKEWFLDRALRLRKMCPDVSISTDIIVAFPGESDNEFEDTMDVLEQVRFEQIFSFKYSPRPLTKAATFINQIDDKTASERLTRLQNRHSEILDEIVAAQKDKIFDVYFEELRANGGVAGRSFNNFLVQVDGSEELLGTTQKAKITNPKRMVLYGELQI.

The MTTase N-terminal domain maps to lysine 3–phenylalanine 118. Residues cysteine 12, cysteine 49, cysteine 81, cysteine 150, cysteine 154, and cysteine 157 each coordinate [4Fe-4S] cluster. A Radical SAM core domain is found at arginine 136–glutamate 369. A TRAM domain is found at alanine 372–isoleucine 433.

This sequence belongs to the methylthiotransferase family. MiaB subfamily. Monomer. The cofactor is [4Fe-4S] cluster.

It is found in the cytoplasm. The catalysed reaction is N(6)-dimethylallyladenosine(37) in tRNA + (sulfur carrier)-SH + AH2 + 2 S-adenosyl-L-methionine = 2-methylsulfanyl-N(6)-dimethylallyladenosine(37) in tRNA + (sulfur carrier)-H + 5'-deoxyadenosine + L-methionine + A + S-adenosyl-L-homocysteine + 2 H(+). Catalyzes the methylthiolation of N6-(dimethylallyl)adenosine (i(6)A), leading to the formation of 2-methylthio-N6-(dimethylallyl)adenosine (ms(2)i(6)A) at position 37 in tRNAs that read codons beginning with uridine. The protein is tRNA-2-methylthio-N(6)-dimethylallyladenosine synthase of Campylobacter concisus (strain 13826).